The chain runs to 689 residues: DNA-directed RNA polymerase subunit beta' (689 aa).

Zn(2+)-binding residues include cysteine 76, cysteine 78, cysteine 94, and cysteine 97. Residues aspartate 496, aspartate 498, and aspartate 500 each coordinate Mg(2+).

The protein belongs to the RNA polymerase beta' chain family. RpoC1 subfamily. In plastids the minimal PEP RNA polymerase catalytic core is composed of four subunits: alpha, beta, beta', and beta''. When a (nuclear-encoded) sigma factor is associated with the core the holoenzyme is formed, which can initiate transcription. The cofactor is Mg(2+). It depends on Zn(2+) as a cofactor.

The protein resides in the plastid. It is found in the chloroplast. It catalyses the reaction RNA(n) + a ribonucleoside 5'-triphosphate = RNA(n+1) + diphosphate. DNA-dependent RNA polymerase catalyzes the transcription of DNA into RNA using the four ribonucleoside triphosphates as substrates. The polypeptide is DNA-directed RNA polymerase subunit beta' (Illicium oligandrum (Star anise)).